A 41-amino-acid polypeptide reads, in one-letter code: Photosystem II reaction center protein L (41 aa).

Residues 20-40 (SLYLGLLLVFVVGLLFSSYFL) traverse the membrane as a helical segment.

This sequence belongs to the PsbL family. PSII is composed of 1 copy each of membrane proteins PsbA, PsbB, PsbC, PsbD, PsbE, PsbF, PsbH, PsbI, PsbJ, PsbK, PsbL, PsbM, PsbT, PsbX, PsbY, PsbZ, Psb30/Ycf12, peripheral proteins PsbO, CyanoQ (PsbQ), PsbU, PsbV and a large number of cofactors. It forms dimeric complexes.

Its subcellular location is the cellular thylakoid membrane. In terms of biological role, one of the components of the core complex of photosystem II (PSII). PSII is a light-driven water:plastoquinone oxidoreductase that uses light energy to abstract electrons from H(2)O, generating O(2) and a proton gradient subsequently used for ATP formation. It consists of a core antenna complex that captures photons, and an electron transfer chain that converts photonic excitation into a charge separation. This subunit is found at the monomer-monomer interface and is required for correct PSII assembly and/or dimerization. This Synechococcus sp. (strain JA-3-3Ab) (Cyanobacteria bacterium Yellowstone A-Prime) protein is Photosystem II reaction center protein L.